The sequence spans 939 residues: Collagen-like protein 3 (939 aa).

4 N-linked (GlcNAc...) asparagine; by host glycosylation sites follow: Asn-15, Asn-35, Asn-39, and Asn-82. Over residues Ser-84–Pro-95 the composition is skewed to low complexity. 2 disordered regions span residues Ser-84–Asn-332 and Ser-358–Ala-697. Collagen-like domains are found at residues Gly-88–Lys-147, Gly-148–Lys-207, Gly-211–Leu-330, Gly-364–Asp-423, Gly-427–Lys-486, Gly-493–Lys-552, Gly-564–Val-622, and Gly-638–Ala-697. 13 stretches are compositionally biased toward basic and acidic residues: residues Lys-96–Glu-110, Asp-123–Ile-182, Asp-189–Leu-230, Asp-237–Pro-260, Asp-267–Lys-288, Lys-297–Glu-314, Lys-360–Leu-371, Asp-378–Leu-416, Asp-423–Ile-491, Asp-498–Ile-527, Lys-537–Lys-552, Lys-560–Ile-580, and Lys-589–Asp-684. Asn-788, Asn-820, Asn-858, Asn-919, and Asn-925 each carry an N-linked (GlcNAc...) asparagine; by host glycan. The tract at residues Asn-896–Gly-923 is disordered. Over residues Tyr-910–Gly-923 the composition is skewed to gly residues.

Post-translationally, may be hydroxylated on lysine by the viral-encoded procollagen-lysine,2-oxoglutarate 5-dioxygenase.

Its subcellular location is the virion. Its function is as follows. May participate in the formation of a layer of cross-linked glycosylated fibrils at the viral surface thus giving it a hairy-like appearance. This chain is Collagen-like protein 3, found in Acanthamoeba polyphaga (Amoeba).